The sequence spans 127 residues: Protein SPIRAL1-like 4 (127 aa).

The interval 1 to 127 (MGKARGVNSG…FGSGPCGSDK (127 aa)) is disordered. Residues 39–48 (TTTTTTTTTT) are compositionally biased toward low complexity. Residue Ser80 is modified to Phosphoserine. Polar residues predominate over residues 80 to 94 (SPNNYYRSDGQNCGN).

The protein belongs to the SPIRAL1 family. In terms of tissue distribution, ubiquitous.

Its function is as follows. Acts redundantly with SPR1 in maintaining the cortical microtubules organization essential for anisotropic cell growth. The protein is Protein SPIRAL1-like 4 (SP1L4) of Arabidopsis thaliana (Mouse-ear cress).